We begin with the raw amino-acid sequence, 440 residues long: MSKTPTVGFVSLGCPKATVDSERILTQLRMEGYQIVPSYEDADVVVVNTCGFIDSAKAESLDAIGEAIAENGKVIVTGCMGVDENNIRGVHPSVLAVTGPQQYEQVVNAVHEVVPPSIEHDPFVDLVPPQGIKLTPRHYAYLKISEGCNHSCSFCIIPSMRGKLVSRPVGDVLSEAERLVKAGVKEVLVISQDTSAYGVDLKYKLDFWNGQPVKTRMLELCEELGKMGVWVRLHYVYPYPNVDDVIPLMAAGKILPYLDIPFQHASPKVLKAMKRPAFEDKTLARIKKWREICPELTIRSTFIVGFPGETEEDFQYLLDWLTEAQLDRVGCFQYSPVDGAPAEAMNLEPVPDEIKQDRWDRFMAHQQAISAARLQLKVGKELDVLIDEVDEDGAIGRSWADAPEIDGMVYVDSEQPLQPGDKVRVRVTNADEYDLWAEVI.

In terms of domain architecture, MTTase N-terminal spans 5 to 115 (PTVGFVSLGC…VVNAVHEVVP (111 aa)). 6 residues coordinate [4Fe-4S] cluster: C14, C50, C79, C148, C152, and C155. A Radical SAM core domain is found at 134-372 (LTPRHYAYLK…MAHQQAISAA (239 aa)). Positions 375–440 (QLKVGKELDV…DEYDLWAEVI (66 aa)) constitute a TRAM domain.

The protein belongs to the methylthiotransferase family. RimO subfamily. The cofactor is [4Fe-4S] cluster.

It localises to the cytoplasm. It carries out the reaction L-aspartate(89)-[ribosomal protein uS12]-hydrogen + (sulfur carrier)-SH + AH2 + 2 S-adenosyl-L-methionine = 3-methylsulfanyl-L-aspartate(89)-[ribosomal protein uS12]-hydrogen + (sulfur carrier)-H + 5'-deoxyadenosine + L-methionine + A + S-adenosyl-L-homocysteine + 2 H(+). Its function is as follows. Catalyzes the methylthiolation of an aspartic acid residue of ribosomal protein uS12. This chain is Ribosomal protein uS12 methylthiotransferase RimO, found in Stutzerimonas stutzeri (strain A1501) (Pseudomonas stutzeri).